Here is an 85-residue protein sequence, read N- to C-terminus: Teretoxin Tan9.6 (85 aa).

An N-terminal signal peptide occupies residues 1–21 (MMSKTGALLLTFMILVLFSMA). Positions 22 to 52 (AADALGERFEDHEQKIREQDAGVGLLSLMGR) are excised as a propeptide.

Contains 3 disulfide bonds. As to expression, expressed by the venom duct.

It localises to the secreted. The sequence is that of Teretoxin Tan9.6 from Terebra anilis (Auger snail).